The following is a 77-amino-acid chain: Large ribosomal subunit protein bL28 (77 aa).

This sequence belongs to the bacterial ribosomal protein bL28 family.

The polypeptide is Large ribosomal subunit protein bL28 (Methylibium petroleiphilum (strain ATCC BAA-1232 / LMG 22953 / PM1)).